The primary structure comprises 301 residues: Ribosomal RNA small subunit methyltransferase H (301 aa).

S-adenosyl-L-methionine contacts are provided by residues 35–37, Asp-55, Phe-84, Asp-105, and Gln-112; that span reads GGH.

It belongs to the methyltransferase superfamily. RsmH family.

It is found in the cytoplasm. The catalysed reaction is cytidine(1402) in 16S rRNA + S-adenosyl-L-methionine = N(4)-methylcytidine(1402) in 16S rRNA + S-adenosyl-L-homocysteine + H(+). In terms of biological role, specifically methylates the N4 position of cytidine in position 1402 (C1402) of 16S rRNA. The chain is Ribosomal RNA small subunit methyltransferase H from Chloroflexus aurantiacus (strain ATCC 29366 / DSM 635 / J-10-fl).